A 537-amino-acid polypeptide reads, in one-letter code: Hydroxylamine reductase (537 aa).

Residues C3, C6, C15, and C21 each contribute to the [4Fe-4S] cluster site. 8 residues coordinate hybrid [4Fe-2O-2S] cluster: H239, E263, C307, C393, C421, C446, E480, and K482. C393 is modified (cysteine persulfide).

This sequence belongs to the HCP family. [4Fe-4S] cluster serves as cofactor. Requires hybrid [4Fe-2O-2S] cluster as cofactor.

Its subcellular location is the cytoplasm. It carries out the reaction A + NH4(+) + H2O = hydroxylamine + AH2 + H(+). Catalyzes the reduction of hydroxylamine to form NH(3) and H(2)O. This Lawsonia intracellularis (strain PHE/MN1-00) protein is Hydroxylamine reductase.